Consider the following 228-residue polypeptide: Putative N-acetylmannosamine-6-phosphate 2-epimerase (228 aa).

This sequence belongs to the NanE family.

It carries out the reaction an N-acyl-D-glucosamine 6-phosphate = an N-acyl-D-mannosamine 6-phosphate. It participates in amino-sugar metabolism; N-acetylneuraminate degradation; D-fructose 6-phosphate from N-acetylneuraminate: step 3/5. In terms of biological role, converts N-acetylmannosamine-6-phosphate (ManNAc-6-P) to N-acetylglucosamine-6-phosphate (GlcNAc-6-P). This chain is Putative N-acetylmannosamine-6-phosphate 2-epimerase, found in Mycoplasmopsis pulmonis (strain UAB CTIP) (Mycoplasma pulmonis).